Here is a 329-residue protein sequence, read N- to C-terminus: tRNA pseudouridine synthase B (329 aa).

Substrate is bound at residue H43. The active-site Nucleophile is D48. Substrate is bound by residues Y76, Y179, and L200.

It belongs to the pseudouridine synthase TruB family. Type 1 subfamily.

The catalysed reaction is uridine(55) in tRNA = pseudouridine(55) in tRNA. Responsible for synthesis of pseudouridine from uracil-55 in the psi GC loop of transfer RNAs. The protein is tRNA pseudouridine synthase B of Yersinia enterocolitica serotype O:8 / biotype 1B (strain NCTC 13174 / 8081).